The primary structure comprises 360 residues: Mitogen-activated protein kinase 14 (360 aa).

Serine 2 carries the N-acetylserine modification. Phosphoserine is present on serine 2. Residue threonine 16 is modified to Phosphothreonine. The region spanning 24–308 is the Protein kinase domain; it reads YQNLSPVGSG…AAQALAHAYF (285 aa). ATP is bound by residues 30–38 and lysine 53; that span reads VGSGAYGSV. 2 positions are modified to N6-acetyllysine: lysine 53 and lysine 152. Aspartate 168 (proton acceptor) is an active-site residue. Threonine 180 carries the phosphothreonine; by MAP2K3, MAP2K4, MAP2K6 and autocatalysis modification. Positions 180–182 match the TXY motif; the sequence is TGY. Tyrosine 182 carries the phosphotyrosine; by MAP2K3, MAP2K4, MAP2K6 and autocatalysis modification. A Phosphothreonine modification is found at threonine 263. The residue at position 323 (tyrosine 323) is a Phosphotyrosine; by ZAP70.

It belongs to the protein kinase superfamily. CMGC Ser/Thr protein kinase family. MAP kinase subfamily. In terms of assembly, component of a signaling complex containing at least AKAP13, PKN1, MAPK14, ZAK and MAP2K3. Within this complex, AKAP13 interacts directly with PKN1, which in turn recruits MAPK14, MAP2K3 and ZAK. Binds to a kinase interaction motif within the protein tyrosine phosphatase, PTPRR. This interaction retains MAPK14 in the cytoplasm and prevents nuclear accumulation. Interacts with SPAG9 and GADD45A. Interacts with CDC25B, CDC25C, DUSP1, DUSP10, DUSP16, NP60, SUPT20H and TAB1. Interacts with casein kinase II subunits CSNK2A1 and CSNK2B. Interacts with PPM1D. Interacts with CDK5RAP3; recruits PPM1D to MAPK14 and may regulate its dephosphorylation. Interacts with DUSP2; this interaction does not lead to catalytic activation of DUSP2 and dephosphrylation of MAPK14. Requires Mg(2+) as cofactor. In terms of processing, dually phosphorylated on Thr-180 and Tyr-182 by the MAP2Ks MAP2K3/MKK3, MAP2K4/MKK4 and MAP2K6/MKK6 in response to inflammatory citokines, environmental stress or growth factors, which activates the enzyme. Dual phosphorylation can also be mediated by TAB1-mediated autophosphorylation. TCR engagement in T-cells also leads to Tyr-323 phosphorylation by ZAP70. Dephosphorylated and inactivated by DUPS1, DUSP10 and DUSP16. PPM1D also mediates dephosphorylation and inactivation of MAPK14. Acetylated at Lys-53 and Lys-152 by KAT2B and EP300. Acetylation at Lys-53 increases the affinity for ATP and enhances kinase activity. Lys-53 and Lys-152 are deacetylated by HDAC3. Post-translationally, ubiquitinated. Ubiquitination leads to degradation by the proteasome pathway. Brain, heart, placenta, pancreas and skeletal muscle. Expressed to a lesser extent in lung, liver and kidney.

It is found in the cytoplasm. It localises to the nucleus. The catalysed reaction is L-seryl-[protein] + ATP = O-phospho-L-seryl-[protein] + ADP + H(+). The enzyme catalyses L-threonyl-[protein] + ATP = O-phospho-L-threonyl-[protein] + ADP + H(+). Its activity is regulated as follows. Activated by cell stresses such as DNA damage, heat shock, osmotic shock, anisomycin and sodium arsenite, as well as pro-inflammatory stimuli such as bacterial lipopolysaccharide (LPS) and interleukin-1. Activation occurs through dual phosphorylation of Thr-180 and Tyr-182 by either of two dual specificity kinases, MAP2K3/MKK3 or MAP2K6/MKK6, and potentially also MAP2K4/MKK4, as well as by TAB1-mediated autophosphorylation. MAPK14 phosphorylated on both Thr-180 and Tyr-182 is 10-20-fold more active than MAPK14 phosphorylated only on Thr-180, whereas MAPK14 phosphorylated on Tyr-182 alone is inactive. whereas Thr-180 is necessary for catalysis, Tyr-182 may be required for auto-activation and substrate recognition. Phosphorylated at Tyr-323 by ZAP70 in an alternative activation pathway in response to TCR signaling in T-cells. This alternative pathway is inhibited by GADD45A. Inhibited by dual specificity phosphatases, such as DUSP1, DUSP10, and DUSP16. Specifically inhibited by the binding of pyridinyl-imidazole compounds, which are cytokine-suppressive anti-inflammatory drugs (CSAID). Isoform Mxi2 is 100-fold less sensitive to these agents than the other isoforms and is not inhibited by DUSP1. Isoform Exip is not activated by MAP2K6. SB203580 is an inhibitor of MAPK14. Serine/threonine kinase which acts as an essential component of the MAP kinase signal transduction pathway. MAPK14 is one of the four p38 MAPKs which play an important role in the cascades of cellular responses evoked by extracellular stimuli such as pro-inflammatory cytokines or physical stress leading to direct activation of transcription factors. Accordingly, p38 MAPKs phosphorylate a broad range of proteins and it has been estimated that they may have approximately 200 to 300 substrates each. Some of the targets are downstream kinases which are activated through phosphorylation and further phosphorylate additional targets. RPS6KA5/MSK1 and RPS6KA4/MSK2 can directly phosphorylate and activate transcription factors such as CREB1, ATF1, the NF-kappa-B isoform RELA/NFKB3, STAT1 and STAT3, but can also phosphorylate histone H3 and the nucleosomal protein HMGN1. RPS6KA5/MSK1 and RPS6KA4/MSK2 play important roles in the rapid induction of immediate-early genes in response to stress or mitogenic stimuli, either by inducing chromatin remodeling or by recruiting the transcription machinery. On the other hand, two other kinase targets, MAPKAPK2/MK2 and MAPKAPK3/MK3, participate in the control of gene expression mostly at the post-transcriptional level, by phosphorylating ZFP36 (tristetraprolin) and ELAVL1, and by regulating EEF2K, which is important for the elongation of mRNA during translation. MKNK1/MNK1 and MKNK2/MNK2, two other kinases activated by p38 MAPKs, regulate protein synthesis by phosphorylating the initiation factor EIF4E2. MAPK14 also interacts with casein kinase II, leading to its activation through autophosphorylation and further phosphorylation of TP53/p53. In the cytoplasm, the p38 MAPK pathway is an important regulator of protein turnover. For example, CFLAR is an inhibitor of TNF-induced apoptosis whose proteasome-mediated degradation is regulated by p38 MAPK phosphorylation. In a similar way, MAPK14 phosphorylates the ubiquitin ligase SIAH2, regulating its activity towards EGLN3. MAPK14 may also inhibit the lysosomal degradation pathway of autophagy by interfering with the intracellular trafficking of the transmembrane protein ATG9. Another function of MAPK14 is to regulate the endocytosis of membrane receptors by different mechanisms that impinge on the small GTPase RAB5A. In addition, clathrin-mediated EGFR internalization induced by inflammatory cytokines and UV irradiation depends on MAPK14-mediated phosphorylation of EGFR itself as well as of RAB5A effectors. Ectodomain shedding of transmembrane proteins is regulated by p38 MAPKs as well. In response to inflammatory stimuli, p38 MAPKs phosphorylate the membrane-associated metalloprotease ADAM17. Such phosphorylation is required for ADAM17-mediated ectodomain shedding of TGF-alpha family ligands, which results in the activation of EGFR signaling and cell proliferation. Another p38 MAPK substrate is FGFR1. FGFR1 can be translocated from the extracellular space into the cytosol and nucleus of target cells, and regulates processes such as rRNA synthesis and cell growth. FGFR1 translocation requires p38 MAPK activation. In the nucleus, many transcription factors are phosphorylated and activated by p38 MAPKs in response to different stimuli. Classical examples include ATF1, ATF2, ATF6, ELK1, PTPRH, DDIT3, TP53/p53 and MEF2C and MEF2A. The p38 MAPKs are emerging as important modulators of gene expression by regulating chromatin modifiers and remodelers. The promoters of several genes involved in the inflammatory response, such as IL6, IL8 and IL12B, display a p38 MAPK-dependent enrichment of histone H3 phosphorylation on 'Ser-10' (H3S10ph) in LPS-stimulated myeloid cells. This phosphorylation enhances the accessibility of the cryptic NF-kappa-B-binding sites marking promoters for increased NF-kappa-B recruitment. Phosphorylates CDC25B and CDC25C which is required for binding to 14-3-3 proteins and leads to initiation of a G2 delay after ultraviolet radiation. Phosphorylates TIAR following DNA damage, releasing TIAR from GADD45A mRNA and preventing mRNA degradation. The p38 MAPKs may also have kinase-independent roles, which are thought to be due to the binding to targets in the absence of phosphorylation. Protein O-Glc-N-acylation catalyzed by the OGT is regulated by MAPK14, and, although OGT does not seem to be phosphorylated by MAPK14, their interaction increases upon MAPK14 activation induced by glucose deprivation. This interaction may regulate OGT activity by recruiting it to specific targets such as neurofilament H, stimulating its O-Glc-N-acylation. Required in mid-fetal development for the growth of embryo-derived blood vessels in the labyrinth layer of the placenta. Also plays an essential role in developmental and stress-induced erythropoiesis, through regulation of EPO gene expression. Isoform MXI2 activation is stimulated by mitogens and oxidative stress and only poorly phosphorylates ELK1 and ATF2. Isoform EXIP may play a role in the early onset of apoptosis. Phosphorylates S100A9 at 'Thr-113'. Phosphorylates NLRP1 downstream of MAP3K20/ZAK in response to UV-B irradiation and ribosome collisions, promoting activation of the NLRP1 inflammasome and pyroptosis. Functionally, (Microbial infection) Activated by phosphorylation by M.tuberculosis EsxA in T-cells leading to inhibition of IFN-gamma production; phosphorylation is apparent within 15 minutes and is inhibited by kinase-specific inhibitors SB203580 and siRNA. In Homo sapiens (Human), this protein is Mitogen-activated protein kinase 14.